Consider the following 473-residue polypeptide: NAD-dependent protein deacetylase SRT1 (473 aa).

The Deacetylase sirtuin-type domain maps to 27-267 (SHLLQCKIEE…AGVMESLNMK (241 aa)). Residues 52-71 (GAGI…KGIW) and 114-117 (QNVD) each bind NAD(+). Residue His-134 is the Proton acceptor of the active site. The Zn(2+) site is built by Cys-142, Cys-145, Cys-167, and Cys-172. NAD(+) is bound by residues 209–211 (GTS), 235–237 (NLQ), and Val-253. Positions 447–473 (LEGSGTSRKRSRTGKRKSKALAEETKA) are disordered. Residues 453–465 (SRKRSRTGKRKSK) show a composition bias toward basic residues.

This sequence belongs to the sirtuin family. Class IV subfamily. Binds to the promoter region of genes influenced by ethylene. Interacts with ENAP1; this interaction is enhanced in the presence of ethylene. Zn(2+) is required as a cofactor.

The protein resides in the nucleus. The catalysed reaction is N(6)-acetyl-L-lysyl-[protein] + NAD(+) + H2O = 2''-O-acetyl-ADP-D-ribose + nicotinamide + L-lysyl-[protein]. In terms of biological role, NAD-dependent protein deacetylase. Has deacetylase activity towards H3K9Ac. May have a function in the safeguard against genome instability and DNA damage to ensure plant cell growth. Involved in responses to ethylene leading to the transcriptional repression of some ethylene-responsive genes via the regulation of histone acetylation H3K9Ac. In Arabidopsis thaliana (Mouse-ear cress), this protein is NAD-dependent protein deacetylase SRT1.